The chain runs to 363 residues: NAD(P)H-quinone oxidoreductase subunit 1, chloroplastic (363 aa).

7 helical membrane-spanning segments follow: residues 26 to 46 (IIWI…GVLV), 98 to 118 (FSIG…VIPF), 127 to 147 (LTIG…GLLM), 246 to 266 (TEYS…NLLV), 268 to 288 (SLFV…YIFV), 300 to 320 (VFGP…FLFI), and 336 to 356 (LLNL…LLTT).

The protein belongs to the complex I subunit 1 family. In terms of assembly, NDH is composed of at least 16 different subunits, 5 of which are encoded in the nucleus.

It localises to the plastid. It is found in the chloroplast thylakoid membrane. It carries out the reaction a plastoquinone + NADH + (n+1) H(+)(in) = a plastoquinol + NAD(+) + n H(+)(out). The enzyme catalyses a plastoquinone + NADPH + (n+1) H(+)(in) = a plastoquinol + NADP(+) + n H(+)(out). NDH shuttles electrons from NAD(P)H:plastoquinone, via FMN and iron-sulfur (Fe-S) centers, to quinones in the photosynthetic chain and possibly in a chloroplast respiratory chain. The immediate electron acceptor for the enzyme in this species is believed to be plastoquinone. Couples the redox reaction to proton translocation, and thus conserves the redox energy in a proton gradient. The chain is NAD(P)H-quinone oxidoreductase subunit 1, chloroplastic from Coffea arabica (Arabian coffee).